Reading from the N-terminus, the 215-residue chain is dITP/XTP pyrophosphatase (215 aa).

13–18 (THNIGK) is a binding site for substrate. D74 (proton acceptor) is an active-site residue. Mg(2+) is bound at residue D74. Substrate-binding positions include S75, 163 to 166 (FGFD), K186, and 199 to 200 (HR).

This sequence belongs to the HAM1 NTPase family. As to quaternary structure, homodimer. Mg(2+) serves as cofactor.

It carries out the reaction XTP + H2O = XMP + diphosphate + H(+). It catalyses the reaction dITP + H2O = dIMP + diphosphate + H(+). The enzyme catalyses ITP + H2O = IMP + diphosphate + H(+). Pyrophosphatase that catalyzes the hydrolysis of nucleoside triphosphates to their monophosphate derivatives, with a high preference for the non-canonical purine nucleotides XTP (xanthosine triphosphate), dITP (deoxyinosine triphosphate) and ITP. Seems to function as a house-cleaning enzyme that removes non-canonical purine nucleotides from the nucleotide pool, thus preventing their incorporation into DNA/RNA and avoiding chromosomal lesions. This chain is dITP/XTP pyrophosphatase, found in Bartonella henselae (strain ATCC 49882 / DSM 28221 / CCUG 30454 / Houston 1) (Rochalimaea henselae).